Consider the following 375-residue polypeptide: AT-rich binding protein (375 aa).

The segment at 29–52 (IVCHTCQEELQTQDQFWKHIQDEH) adopts a C2H2-type 1 zinc-finger fold. Over residues 110–119 (DDQREMDIHE) the composition is skewed to basic and acidic residues. The disordered stretch occupies residues 110 to 142 (DDQREMDIHEAQQQQHQQQQQHQQQQQLQQQQQ). Residues 121-142 (QQQQHQQQQQHQQQQQLQQQQQ) are compositionally biased toward low complexity. C2H2-type zinc fingers lie at residues 308–332 (YICD…RVVH) and 338–361 (FNCE…KKKH).

It localises to the nucleus. May be a transcription factor for genes having (A+T) stretches in their promoter and/or enhancer regions. Binds to AT rich DNA. The chain is AT-rich binding protein from Drosophila pseudoobscura pseudoobscura (Fruit fly).